A 477-amino-acid polypeptide reads, in one-letter code: Aspartyl/glutamyl-tRNA(Asn/Gln) amidotransferase subunit B (477 aa).

The protein belongs to the GatB/GatE family. GatB subfamily. Heterotrimer of A, B and C subunits.

The catalysed reaction is L-glutamyl-tRNA(Gln) + L-glutamine + ATP + H2O = L-glutaminyl-tRNA(Gln) + L-glutamate + ADP + phosphate + H(+). It carries out the reaction L-aspartyl-tRNA(Asn) + L-glutamine + ATP + H2O = L-asparaginyl-tRNA(Asn) + L-glutamate + ADP + phosphate + 2 H(+). Functionally, allows the formation of correctly charged Asn-tRNA(Asn) or Gln-tRNA(Gln) through the transamidation of misacylated Asp-tRNA(Asn) or Glu-tRNA(Gln) in organisms which lack either or both of asparaginyl-tRNA or glutaminyl-tRNA synthetases. The reaction takes place in the presence of glutamine and ATP through an activated phospho-Asp-tRNA(Asn) or phospho-Glu-tRNA(Gln). This Lawsonia intracellularis (strain PHE/MN1-00) protein is Aspartyl/glutamyl-tRNA(Asn/Gln) amidotransferase subunit B.